Here is a 283-residue protein sequence, read N- to C-terminus: D-alanine aminotransferase (283 aa).

A substrate-binding site is contributed by Tyr32. Residue Arg51 coordinates pyridoxal 5'-phosphate. Substrate is bound by residues Arg99 and His101. The active-site Proton acceptor is the Lys146. Lys146 carries the post-translational modification N6-(pyridoxal phosphate)lysine. Pyridoxal 5'-phosphate is bound at residue Glu178.

The protein belongs to the class-IV pyridoxal-phosphate-dependent aminotransferase family. In terms of assembly, homodimer. Pyridoxal 5'-phosphate is required as a cofactor.

The enzyme catalyses D-alanine + 2-oxoglutarate = D-glutamate + pyruvate. Its function is as follows. Acts on the D-isomers of alanine, leucine, aspartate, glutamate, aminobutyrate, norvaline and asparagine. The enzyme transfers an amino group from a substrate D-amino acid to the pyridoxal phosphate cofactor to form pyridoxamine and an alpha-keto acid in the first half-reaction. The second-half reaction is the reverse of the first, transferring the amino group from the pyridoxamine to a second alpha-keto acid to form the product D-amino acid via a ping-pong mechanism. This is an important process in the formation of D-alanine and D-glutamate, which are essential bacterial cell wall components. The protein is D-alanine aminotransferase (dat) of Bacillus sp. (strain YM-1).